The chain runs to 566 residues: Glucose-6-phosphate isomerase (566 aa).

The active-site Proton donor is Glu374. Residues His405 and Lys529 contribute to the active site.

Belongs to the GPI family.

Its subcellular location is the cytoplasm. It carries out the reaction alpha-D-glucose 6-phosphate = beta-D-fructose 6-phosphate. Its pathway is carbohydrate biosynthesis; gluconeogenesis. The protein operates within carbohydrate degradation; glycolysis; D-glyceraldehyde 3-phosphate and glycerone phosphate from D-glucose: step 2/4. Its function is as follows. Catalyzes the reversible isomerization of glucose-6-phosphate to fructose-6-phosphate. In Bifidobacterium longum (strain NCC 2705), this protein is Glucose-6-phosphate isomerase.